The sequence spans 156 residues: Hydrogenase 3 maturation protease (156 aa).

Residues D16, D62, and H90 each coordinate Ni(2+).

This sequence belongs to the peptidase A31 family. Monomer.

It carries out the reaction This enzyme specifically removes a 32-amino acid peptide from the C-terminus of the precursor of the large subunit of E.coli hydrogenase 3 by cleavage at the C-terminal side of Arg-537.. Its function is as follows. Protease involved in the C-terminal processing of HycE, the large subunit of hydrogenase 3. The sequence is that of Hydrogenase 3 maturation protease (hycI) from Escherichia coli O157:H7.